Here is a 227-residue protein sequence, read N- to C-terminus: 2-C-methyl-D-erythritol 4-phosphate cytidylyltransferase (227 aa).

It belongs to the IspD/TarI cytidylyltransferase family. IspD subfamily.

The catalysed reaction is 2-C-methyl-D-erythritol 4-phosphate + CTP + H(+) = 4-CDP-2-C-methyl-D-erythritol + diphosphate. The protein operates within isoprenoid biosynthesis; isopentenyl diphosphate biosynthesis via DXP pathway; isopentenyl diphosphate from 1-deoxy-D-xylulose 5-phosphate: step 2/6. Catalyzes the formation of 4-diphosphocytidyl-2-C-methyl-D-erythritol from CTP and 2-C-methyl-D-erythritol 4-phosphate (MEP). The sequence is that of 2-C-methyl-D-erythritol 4-phosphate cytidylyltransferase from Lachnospira eligens (strain ATCC 27750 / DSM 3376 / VPI C15-48 / C15-B4) (Eubacterium eligens).